The chain runs to 243 residues: UPF0246 protein Spy49_1742 (243 aa).

It belongs to the UPF0246 family.

The protein is UPF0246 protein Spy49_1742 of Streptococcus pyogenes serotype M49 (strain NZ131).